A 473-amino-acid chain; its full sequence is Photosystem II CP43 reaction center protein (473 aa).

Positions 1 to 14 (MKTLYSLRRFYPVE) are excised as a propeptide. At threonine 15 the chain carries N-acetylthreonine. Residue threonine 15 is modified to Phosphothreonine. The next 5 membrane-spanning stretches (helical) occupy residues 69–93 (LFEV…PHLA), 134–155 (LLGP…KDRN), 178–200 (KALY…RKIT), 255–275 (KPFA…LSYS), and 291–312 (WFNN…ASQA). Glutamate 367 is a [CaMn4O5] cluster binding site. A helical membrane pass occupies residues 447–471 (RARAAAAGFEKGIDRDFEPVLSMTP).

The protein belongs to the PsbB/PsbC family. PsbC subfamily. PSII is composed of 1 copy each of membrane proteins PsbA, PsbB, PsbC, PsbD, PsbE, PsbF, PsbH, PsbI, PsbJ, PsbK, PsbL, PsbM, PsbT, PsbX, PsbY, PsbZ, Psb30/Ycf12, at least 3 peripheral proteins of the oxygen-evolving complex and a large number of cofactors. It forms dimeric complexes. Requires Binds multiple chlorophylls and provides some of the ligands for the Ca-4Mn-5O cluster of the oxygen-evolving complex. It may also provide a ligand for a Cl- that is required for oxygen evolution. PSII binds additional chlorophylls, carotenoids and specific lipids. as cofactor.

The protein resides in the plastid. It is found in the chloroplast thylakoid membrane. Functionally, one of the components of the core complex of photosystem II (PSII). It binds chlorophyll and helps catalyze the primary light-induced photochemical processes of PSII. PSII is a light-driven water:plastoquinone oxidoreductase, using light energy to abstract electrons from H(2)O, generating O(2) and a proton gradient subsequently used for ATP formation. The sequence is that of Photosystem II CP43 reaction center protein from Buxus microphylla (Littleleaf boxwood).